A 245-amino-acid chain; its full sequence is NAD(P)H-quinone oxidoreductase subunit K (245 aa).

Residues C58, C59, C123, and C154 each contribute to the [4Fe-4S] cluster site.

The protein belongs to the complex I 20 kDa subunit family. In terms of assembly, NDH-1 can be composed of about 15 different subunits; different subcomplexes with different compositions have been identified which probably have different functions. Requires [4Fe-4S] cluster as cofactor.

It localises to the cellular thylakoid membrane. It carries out the reaction a plastoquinone + NADH + (n+1) H(+)(in) = a plastoquinol + NAD(+) + n H(+)(out). The enzyme catalyses a plastoquinone + NADPH + (n+1) H(+)(in) = a plastoquinol + NADP(+) + n H(+)(out). In terms of biological role, NDH-1 shuttles electrons from an unknown electron donor, via FMN and iron-sulfur (Fe-S) centers, to quinones in the respiratory and/or the photosynthetic chain. The immediate electron acceptor for the enzyme in this species is believed to be plastoquinone. Couples the redox reaction to proton translocation, and thus conserves the redox energy in a proton gradient. Cyanobacterial NDH-1 also plays a role in inorganic carbon-concentration. This chain is NAD(P)H-quinone oxidoreductase subunit K, found in Nostoc sp. (strain PCC 7120 / SAG 25.82 / UTEX 2576).